The chain runs to 281 residues: Arylamine N-acetyltransferase (281 aa).

The active-site Acyl-thioester intermediate is Cys69. Active-site residues include His107 and Asp122. An N6-acetyllysine mark is found at Lys214 and Lys281.

This sequence belongs to the arylamine N-acetyltransferase family. Homodimer. Post-translationally, acetylated on Lys-214 and Lys-281. Deacetylated by CobB.

It localises to the cytoplasm. The catalysed reaction is an arylamine + acetyl-CoA = an N-acetylarylamine + CoA. The enzyme catalyses an N-hydroxyarylamine + acetyl-CoA = an N-acetoxyarylamine + CoA. Its activity is regulated as follows. Inhibited by salicylic acid, acetylsalicylic acid, 2,6-dichrolo-4-nitrophenol, N-ethylmaleimide and iodoacetamide. Catalyzes the acetyl-CoA-dependent N-acetylation of aromatic amines, and, probably, the O-acetylation of N-hydroxyarylamines. In vitro, catalyzes the N-acetylation of various arylamines such as aminobenzoic acid, aminophenol, aminotoluene, phenetidine, anisidine, aniline, isoniazid and 2-amino-fluorene. N-hydroxyarylamine O-acetyltransferase activity has not been assayed directly, however, NhoA activity is required for the mutagenicity of nitroaromatic compounds, suggesting that it also has O-acetyltransferase activity. In Escherichia coli (strain K12), this protein is Arylamine N-acetyltransferase (nhoA).